The chain runs to 508 residues: ADP-ribosylarginine hydrolase CG3568 (508 aa).

Arginine 209, glycine 349, glycine 351, glycine 353, valine 354, tryptophan 355, tryptophan 390, aspartate 441, asparagine 448, glutamate 449, glycine 459, and aspartate 460 together coordinate ADP-D-ribose.

It carries out the reaction N(omega)-(ADP-D-ribosyl)-L-arginyl-[protein] + H2O = ADP-D-ribose + L-arginyl-[protein]. The catalysed reaction is N(omega)-(ADP-D-ribosyl)-L-arginine + H2O = ADP-D-ribose + L-arginine. Functionally, protein ADP-ribosyl hydrolase that specifically removes mono-ADP-ribosyl modifications from protein arginine residues. The chain is ADP-ribosylarginine hydrolase CG3568 from Drosophila melanogaster (Fruit fly).